The primary structure comprises 504 residues: Maturase K (504 aa).

This sequence belongs to the intron maturase 2 family. MatK subfamily.

Its subcellular location is the plastid. It localises to the chloroplast. Functionally, usually encoded in the trnK tRNA gene intron. Probably assists in splicing its own and other chloroplast group II introns. The protein is Maturase K of Rorippa amphibia (Great yellow-cress).